Reading from the N-terminus, the 383-residue chain is Acetylornithine deacetylase (383 aa).

His-80 provides a ligand contact to Zn(2+). Asp-82 is a catalytic residue. Position 112 (Asp-112) interacts with Zn(2+). The active site involves Glu-144. Positions 145, 169, and 355 each coordinate Zn(2+).

The protein belongs to the peptidase M20A family. ArgE subfamily. Homodimer. Zn(2+) serves as cofactor. Requires Co(2+) as cofactor. It depends on glutathione as a cofactor.

Its subcellular location is the cytoplasm. The catalysed reaction is N(2)-acetyl-L-ornithine + H2O = L-ornithine + acetate. It functions in the pathway amino-acid biosynthesis; L-arginine biosynthesis; L-ornithine from N(2)-acetyl-L-ornithine (linear): step 1/1. In terms of biological role, catalyzes the hydrolysis of the amide bond of N(2)-acetylated L-amino acids. Cleaves the acetyl group from N-acetyl-L-ornithine to form L-ornithine, an intermediate in L-arginine biosynthesis pathway, and a branchpoint in the synthesis of polyamines. The polypeptide is Acetylornithine deacetylase (Salmonella paratyphi A (strain ATCC 9150 / SARB42)).